The chain runs to 163 residues: Dual specificity phosphatase 28 (163 aa).

One can recognise a Tyrosine-protein phosphatase domain in the interval 10–151; the sequence is PFARVAPALF…LQKYEQTLQA (142 aa). C95 serves as the catalytic Phosphocysteine intermediate.

It belongs to the protein-tyrosine phosphatase family. Non-receptor class dual specificity subfamily. As to quaternary structure, monomer.

The catalysed reaction is O-phospho-L-tyrosyl-[protein] + H2O = L-tyrosyl-[protein] + phosphate. The enzyme catalyses O-phospho-L-seryl-[protein] + H2O = L-seryl-[protein] + phosphate. It catalyses the reaction O-phospho-L-threonyl-[protein] + H2O = L-threonyl-[protein] + phosphate. Functionally, has phosphatase activity with the synthetic substrate 6,8-difluoro-4-methylumbelliferyl phosphate (in vitro). Has almost no detectable activity with phosphotyrosine, even less activity with phosphothreonine and displays complete lack of activity with phosphoserine. The poor activity with phosphotyrosine may be due to steric hindrance by bulky amino acid sidechains that obstruct access to the active site. This is Dual specificity phosphatase 28 (Dusp28) from Mus musculus (Mouse).